A 115-amino-acid polypeptide reads, in one-letter code: Protein Diedel (115 aa).

A signal peptide spans 1-24; sequence MASPVVSLLLVGICALAFVHVARS. Intrachain disulfides connect cysteine 26–cysteine 81, cysteine 27–cysteine 87, cysteine 42–cysteine 55, cysteine 60–cysteine 71, and cysteine 76–cysteine 83.

This sequence belongs to the Diedel family. Detected in hemolymph (at protein level). Also expressed in the fat body and is probably synthesized in the fat body and secreted into the hemolymph.

The protein localises to the secreted. Cytokine which promotes survival following infection by Sindbis virus by suppressing the immune deficiency pathway. Following infection by the enteropathogenic bacteria E.carotovora limits intestinal stem cells proliferation. When secreted from muscle or adipose tissue, can attenuate age-related intestinal tissue degeneration by inhibiting apoptosis. The chain is Protein Diedel from Drosophila melanogaster (Fruit fly).